We begin with the raw amino-acid sequence, 878 residues long: Aconitate hydratase A (878 aa).

Positions 426, 492, and 495 each coordinate [4Fe-4S] cluster.

Belongs to the aconitase/IPM isomerase family. As to quaternary structure, monomer. The cofactor is [4Fe-4S] cluster.

It carries out the reaction citrate = D-threo-isocitrate. The catalysed reaction is (2S,3R)-3-hydroxybutane-1,2,3-tricarboxylate = 2-methyl-cis-aconitate + H2O. It functions in the pathway carbohydrate metabolism; tricarboxylic acid cycle; isocitrate from oxaloacetate: step 2/2. The protein operates within organic acid metabolism; propanoate degradation. In terms of biological role, involved in the catabolism of short chain fatty acids (SCFA) via the tricarboxylic acid (TCA)(acetyl degradation route) and probably the 2-methylcitrate cycle I (propionate degradation route). Catalyzes the reversible isomerization of citrate to isocitrate via cis-aconitate. Could catalyze the hydration of 2-methyl-cis-aconitate to yield (2R,3S)-2-methylisocitrate. The apo form of AcnA functions as a RNA-binding regulatory protein. The sequence is that of Aconitate hydratase A (acnA) from Rickettsia prowazekii (strain Madrid E).